We begin with the raw amino-acid sequence, 360 residues long: Chorismate synthase (360 aa).

An NADP(+)-binding site is contributed by R46. FMN is bound by residues 123–125, 235–236, G275, 290–294, and R316; these read RSS, NA, and KPTPS.

Belongs to the chorismate synthase family. As to quaternary structure, homotetramer. The cofactor is FMNH2.

It carries out the reaction 5-O-(1-carboxyvinyl)-3-phosphoshikimate = chorismate + phosphate. Its pathway is metabolic intermediate biosynthesis; chorismate biosynthesis; chorismate from D-erythrose 4-phosphate and phosphoenolpyruvate: step 7/7. Catalyzes the anti-1,4-elimination of the C-3 phosphate and the C-6 proR hydrogen from 5-enolpyruvylshikimate-3-phosphate (EPSP) to yield chorismate, which is the branch point compound that serves as the starting substrate for the three terminal pathways of aromatic amino acid biosynthesis. This reaction introduces a second double bond into the aromatic ring system. The sequence is that of Chorismate synthase from Wolinella succinogenes (strain ATCC 29543 / DSM 1740 / CCUG 13145 / JCM 31913 / LMG 7466 / NCTC 11488 / FDC 602W) (Vibrio succinogenes).